A 352-amino-acid chain; its full sequence is Endophilin-A1 (352 aa).

The tract at residues 1 to 21 (MSVAGLKKQFHKATQKVSEKV) is membrane-binding amphipathic helix. Positions 1-27 (MSVAGLKKQFHKATQKVSEKVGGAEGT) are disordered. A binds and tubulates liposomes region spans residues 1–125 (MSVAGLKKQF…EVGEAMRELS (125 aa)). Residues 18-249 (SEKVGGAEGT…LEERIRQASS (232 aa)) form the BAR domain. The required for dimerization upon membrane association stretch occupies residues 60–87 (PNPASRAKLSMINTMSKIRGQEKGPGYP). A coiled-coil region spans residues 181–248 (EELRQALEKF…RLEERIRQAS (68 aa)). Ser262 is subject to Phosphoserine. Residues 264–289 (EFATGDSTQPNGGLSHTGTPKPPGVQ) form a disordered region. Positions 268–281 (GDSTQPNGGLSHTG) are enriched in polar residues. The SH3 domain maps to 290–349 (MDQPCCRALYDFEPENEGELGFKEGDIITLTNQIDENWYEGMLHGQSGFFPINYVEILVA). Position 299 is a phosphotyrosine (Tyr299).

Belongs to the endophilin family. Monomer; in cytoplasm. Homodimer; when associated with membranes. Interacts with SYNJ1. Interacts with DNM1. Interacts with MAP4K3; the interaction appears to regulate MAP4K3-mediated JNK activation. Interacts with OPHN1. Interacts with PDCD6IP. Interacts with BIN2. Interacts with ATXN2. Interacts with ADAM9 and ADAM15 cytoplasmic tails. Interacts with TMEM108. Interacts with ADGRB2.

Its subcellular location is the cytoplasm. The protein resides in the membrane. The protein localises to the early endosome. It localises to the presynapse. In terms of biological role, implicated in synaptic vesicle endocytosis. May recruit other proteins to membranes with high curvature. Required for BDNF-dependent dendrite outgrowth. Cooperates with SH3GL2 to mediate BDNF-NTRK2 early endocytic trafficking and signaling from early endosomes. The sequence is that of Endophilin-A1 (Sh3gl2) from Mus musculus (Mouse).